The sequence spans 146 residues: Large ribosomal subunit protein uL15 (146 aa).

Positions 1–54 (MKLHELKPAAGSRKAPKRVGRGTGSGLGRNAGKGEKGQNARSGGGVRPGFEGGQ) are disordered. Composition is skewed to gly residues over residues 21-31 (RGTGSGLGRNA) and 42-52 (SGGGVRPGFEG).

This sequence belongs to the universal ribosomal protein uL15 family. Part of the 50S ribosomal subunit.

In terms of biological role, binds to the 23S rRNA. This chain is Large ribosomal subunit protein uL15, found in Clostridium acetobutylicum (strain ATCC 824 / DSM 792 / JCM 1419 / IAM 19013 / LMG 5710 / NBRC 13948 / NRRL B-527 / VKM B-1787 / 2291 / W).